The primary structure comprises 448 residues: MPKSLENTNETPKSFFITTLGCPKNTVDSMAMHQSLLKEGLLPAAGPEASDFHLVNTCTFIQDATKETIQTILDSIDIKKQNKQKLVVVGCFAERAGKEISDDLPEVDLHFGTGKYDKAGEILRKNFPLEFKDLTEFNEDLLERLTTSKGIENYSKPYSYVKISDGCNRGCHFCIIPNLRGKYRDTDSNDVLEQTKLAVKAGSKEICLVSQDTVFYGKDTDKLMDLVRSVAAVEGLEILRLLYLYPDKKTEKLLDLYREIPKIAPYLESPLQHVSKSVLKSMNRTGDYEFFKSLFQKARDIRPDLEIRTSFILGFPGETMEDVEEIIRFVEDVKPEKVNLFPYSPQEGTKGATMDGQLKDKEIARRVNLVREAYLGTLKTIHQNRIGKIYPCVVDEVLDDGAIVRRLQDAPEIDEVVYVETKDLKLGQFGKVRVDSFYELDMSGTWVD.

One can recognise an MTTase N-terminal domain in the interval 13–128 (KSFFITTLGC…AGEILRKNFP (116 aa)). Cysteine 22, cysteine 58, cysteine 91, cysteine 167, cysteine 171, and cysteine 174 together coordinate [4Fe-4S] cluster. The Radical SAM core domain maps to 153–382 (NYSKPYSYVK…AYLGTLKTIH (230 aa)). A TRAM domain is found at 383-448 (QNRIGKIYPC…ELDMSGTWVD (66 aa)).

It belongs to the methylthiotransferase family. RimO subfamily. [4Fe-4S] cluster serves as cofactor.

Its subcellular location is the cytoplasm. It carries out the reaction L-aspartate(89)-[ribosomal protein uS12]-hydrogen + (sulfur carrier)-SH + AH2 + 2 S-adenosyl-L-methionine = 3-methylsulfanyl-L-aspartate(89)-[ribosomal protein uS12]-hydrogen + (sulfur carrier)-H + 5'-deoxyadenosine + L-methionine + A + S-adenosyl-L-homocysteine + 2 H(+). In terms of biological role, catalyzes the methylthiolation of an aspartic acid residue of ribosomal protein uS12. In Leptospira biflexa serovar Patoc (strain Patoc 1 / Ames), this protein is Ribosomal protein uS12 methylthiotransferase RimO.